We begin with the raw amino-acid sequence, 284 residues long: tRNA-cytidine(32) 2-sulfurtransferase (284 aa).

The PP-loop motif signature appears at 44–49; it reads SGGKDS. [4Fe-4S] cluster-binding residues include C119, C122, and C210.

Belongs to the TtcA family. As to quaternary structure, homodimer. Requires Mg(2+) as cofactor. The cofactor is [4Fe-4S] cluster.

Its subcellular location is the cytoplasm. The enzyme catalyses cytidine(32) in tRNA + S-sulfanyl-L-cysteinyl-[cysteine desulfurase] + AH2 + ATP = 2-thiocytidine(32) in tRNA + L-cysteinyl-[cysteine desulfurase] + A + AMP + diphosphate + H(+). The protein operates within tRNA modification. Functionally, catalyzes the ATP-dependent 2-thiolation of cytidine in position 32 of tRNA, to form 2-thiocytidine (s(2)C32). The sulfur atoms are provided by the cysteine/cysteine desulfurase (IscS) system. The polypeptide is tRNA-cytidine(32) 2-sulfurtransferase (Chromohalobacter salexigens (strain ATCC BAA-138 / DSM 3043 / CIP 106854 / NCIMB 13768 / 1H11)).